We begin with the raw amino-acid sequence, 93 residues long: Molybdopterin synthase sulfur carrier subunit (93 aa).

Glycine 93 bears the 1-thioglycine; alternate mark. A Glycyl adenylate; alternate modification is found at glycine 93.

The protein belongs to the MoaD family. MOCS2A subfamily. As to quaternary structure, heterotetramer; composed of 2 small (MOCS2A) and 2 large (MOCS2B) subunits. Post-translationally, C-terminal thiocarboxylation occurs in 2 steps, it is first acyl-adenylated (-COAMP) via the hesA/moeB/thiF part of uba4, then thiocarboxylated (-COSH) via the rhodanese domain of uba4.

The protein localises to the cytoplasm. It functions in the pathway cofactor biosynthesis; molybdopterin biosynthesis. Functionally, acts as a sulfur carrier required for molybdopterin biosynthesis. Component of the molybdopterin synthase complex that catalyzes the conversion of precursor Z into molybdopterin by mediating the incorporation of 2 sulfur atoms into precursor Z to generate a dithiolene group. In the complex, serves as sulfur donor by being thiocarboxylated (-COSH) at its C-terminus by uba4. After interaction with MOCS2B, the sulfur is then transferred to precursor Z to form molybdopterin. The polypeptide is Molybdopterin synthase sulfur carrier subunit (Pyrenophora tritici-repentis (strain Pt-1C-BFP) (Wheat tan spot fungus)).